Consider the following 291-residue polypeptide: Ribosomal RNA small subunit methyltransferase A (291 aa).

Positions 21, 23, 48, 70, 95, and 115 each coordinate S-adenosyl-L-methionine.

It belongs to the class I-like SAM-binding methyltransferase superfamily. rRNA adenine N(6)-methyltransferase family. RsmA subfamily.

It localises to the cytoplasm. The enzyme catalyses adenosine(1518)/adenosine(1519) in 16S rRNA + 4 S-adenosyl-L-methionine = N(6)-dimethyladenosine(1518)/N(6)-dimethyladenosine(1519) in 16S rRNA + 4 S-adenosyl-L-homocysteine + 4 H(+). Specifically dimethylates two adjacent adenosines (A1518 and A1519) in the loop of a conserved hairpin near the 3'-end of 16S rRNA in the 30S particle. May play a critical role in biogenesis of 30S subunits. The polypeptide is Ribosomal RNA small subunit methyltransferase A (Prochlorococcus marinus (strain NATL1A)).